The sequence spans 531 residues: Flavin-containing monooxygenase 3 (531 aa).

Residues 9-13 (GAGIS), Glu32, 40-41 (LW), and 61-62 (NS) contribute to the FAD site. NADP(+) contacts are provided by residues 60–61 (TN) and 195–198 (SGCD). A helical transmembrane segment spans residues 511–531 (FSPWLKLLAIAVLLIAAVLVF).

The protein belongs to the FMO family. FAD is required as a cofactor. As to expression, liver.

It localises to the microsome membrane. The protein resides in the endoplasmic reticulum membrane. It carries out the reaction trimethylamine + NADPH + O2 = trimethylamine N-oxide + NADP(+) + H2O. It catalyses the reaction N,N-dimethylaniline + NADPH + O2 + H(+) = N,N-dimethylaniline N-oxide + NADP(+) + H2O. The catalysed reaction is hypotaurine + NADPH + O2 + H(+) = taurine + NADP(+) + H2O. The enzyme catalyses (S)-nicotine + NADPH + O2 = trans-(S)-nicotine N(1')-oxide + NADP(+) + H2O. It carries out the reaction albendazole + NADPH + O2 + H(+) = albendazole S-oxide + NADP(+) + H2O. Essential hepatic enzyme that catalyzes the oxygenation of a wide variety of nitrogen- and sulfur-containing compounds including drugs as well as dietary compounds. Plays an important role in the metabolism of trimethylamine (TMA), via the production of trimethylamine N-oxide (TMAO) metabolite. TMA is generated by the action of gut microbiota using dietary precursors such as choline, choline containing compounds, betaine or L-carnitine. By regulating TMAO concentration, FMO3 directly impacts both platelet responsiveness and rate of thrombus formation. The sequence is that of Flavin-containing monooxygenase 3 (FMO3) from Oryctolagus cuniculus (Rabbit).